The primary structure comprises 740 residues: Catalase-peroxidase (740 aa).

The disordered stretch occupies residues 1-44 (MSDSCPVAHDGNTASTSESENPAIPSPTPTGNRPRTNRDWWPNQ). Residues 109–231 (WHAAGTYRIA…LGAVQMGLIY (123 aa)) constitute a cross-link (tryptophyl-tyrosyl-methioninium (Trp-Tyr) (with M-257)). H110 acts as the Proton acceptor in catalysis. A cross-link (tryptophyl-tyrosyl-methioninium (Tyr-Met) (with W-109)) is located at residues 231-257 (YVNPEGPNGQPDPVAAARDIRETFARM). H272 lines the heme b pocket.

Belongs to the peroxidase family. Peroxidase/catalase subfamily. Homodimer or homotetramer. Requires heme b as cofactor. Formation of the three residue Trp-Tyr-Met cross-link is important for the catalase, but not the peroxidase activity of the enzyme.

The catalysed reaction is H2O2 + AH2 = A + 2 H2O. It catalyses the reaction 2 H2O2 = O2 + 2 H2O. In terms of biological role, bifunctional enzyme with both catalase and broad-spectrum peroxidase activity. This is Catalase-peroxidase from Rhodococcus erythropolis (strain PR4 / NBRC 100887).